The chain runs to 290 residues: Glutamate 5-kinase (290 aa).

Residue K21 participates in ATP binding. Residues S60, D151, and N163 each contribute to the substrate site. Position 217 to 223 (T217 to K223) interacts with ATP.

Belongs to the glutamate 5-kinase family.

It is found in the cytoplasm. It carries out the reaction L-glutamate + ATP = L-glutamyl 5-phosphate + ADP. It participates in amino-acid biosynthesis; L-proline biosynthesis; L-glutamate 5-semialdehyde from L-glutamate: step 1/2. Functionally, catalyzes the transfer of a phosphate group to glutamate to form L-glutamate 5-phosphate. The sequence is that of Glutamate 5-kinase from Leptospira interrogans serogroup Icterohaemorrhagiae serovar copenhageni (strain Fiocruz L1-130).